The sequence spans 306 residues: Elongation factor Ts (306 aa).

Positions 81-84 (TDFV) are involved in Mg(2+) ion dislocation from EF-Tu.

It belongs to the EF-Ts family.

Its subcellular location is the cytoplasm. In terms of biological role, associates with the EF-Tu.GDP complex and induces the exchange of GDP to GTP. It remains bound to the aminoacyl-tRNA.EF-Tu.GTP complex up to the GTP hydrolysis stage on the ribosome. The polypeptide is Elongation factor Ts (Polaromonas naphthalenivorans (strain CJ2)).